A 175-amino-acid chain; its full sequence is MSPNLQEGARLVEGKPSSTSFSIESILGLDQKKDDAPSMKPHRPWADTCSSLGKDANLRLHVPSFPNGISFPHPGDHPMPEERAMKYENYFSASERASLKRELNWYRGRRPRTAFTQNQVEVLENVFRVNCYPGIDIREDLARKLNLEEDRIQIWFQNRRAKLKRSHRESQFLMA.

Residues 1–44 (MSPNLQEGARLVEGKPSSTSFSIESILGLDQKKDDAPSMKPHRP) form a disordered region. The segment at residues 108–167 (GRRPRTAFTQNQVEVLENVFRVNCYPGIDIREDLARKLNLEEDRIQIWFQNRRAKLKRSH) is a DNA-binding region (homeobox).

Belongs to the ANF homeobox family. Interacts with TLE1.

It is found in the nucleus. Functionally, required for the normal development of the forebrain, eyes and other anterior structures such as the olfactory placodes and pituitary gland. Possible transcriptional repressor. Binds to the palindromic PIII sequence, 5'-AGCTTGAGTCTAATTGAATTAACTGTAC-3'. The chain is Homeobox expressed in ES cells 1 (HESX1) from Oryctolagus cuniculus (Rabbit).